Reading from the N-terminus, the 350-residue chain is Protein pelota homolog (350 aa).

It belongs to the eukaryotic release factor 1 family. Pelota subfamily. Monomer. The cofactor is a divalent metal cation.

Its subcellular location is the cytoplasm. May function in recognizing stalled ribosomes, interact with stem-loop structures in stalled mRNA molecules, and effect endonucleolytic cleavage of the mRNA. May play a role in the release non-functional ribosomes and degradation of damaged mRNAs. Has endoribonuclease activity. In Methanosarcina barkeri (strain Fusaro / DSM 804), this protein is Protein pelota homolog.